The chain runs to 283 residues: MKKVGVIPNINKDKDLEVTKSVVNWLLDHGSEPYLNEIVAARIGYEKHGKKANEIYSKSDFLIALGGDGTILNVARLCAPFGTPILAVNLGHLGFLTEIDASELFPSLEKIYKGEYAIEKRMMLEANVVKNDMEVINFRALNDIVITRGAFSRMARIKAYVNDNYVDTYLADGVIVATPTGSTAYSLSAGGPIVYPTVEVIIITPICPHTLYSRSIVVSPDDVIRLEIAEENQDLMITTDGQQGYKIDYRDVIYIKKSNEYTNLIKVKNSNFFDLLRDKLTER.

The Proton acceptor role is filled by Asp68. NAD(+) is bound by residues 68–69, 142–143, Arg153, Asp172, 183–188, and Gln242; these read DG, ND, and TAYSLS.

It belongs to the NAD kinase family. Requires a divalent metal cation as cofactor.

It is found in the cytoplasm. The catalysed reaction is NAD(+) + ATP = ADP + NADP(+) + H(+). Functionally, involved in the regulation of the intracellular balance of NAD and NADP, and is a key enzyme in the biosynthesis of NADP. Catalyzes specifically the phosphorylation on 2'-hydroxyl of the adenosine moiety of NAD to yield NADP. The protein is NAD kinase of Caldanaerobacter subterraneus subsp. tengcongensis (strain DSM 15242 / JCM 11007 / NBRC 100824 / MB4) (Thermoanaerobacter tengcongensis).